A 332-amino-acid chain; its full sequence is MGKRAAHIGLRALADLATPMAVRVAATLRVADHIAAGHRTAAEIASAAGAHADSLDRLLRHLVAVGLFTRDGQGVYGLTEFGEQLRDDHAAGKRKWLDMNSAVGRGDLGFVELAHSIRTGQPAYPVRYGTSFWEDLGSDPVLSASFDTLMSHHLELDYTGIAAKYDWAALGHVVDVGGGSGGLLSALLTAHEDLSGTVLDLQGPASAAHRRFLDTGLSGRAQVVVGSFFDPLPAGAGGYVLSAVLHDWDDLSAVAILRRCAEAAGSGGVVLVIEAVAGDEHAGTGMDLRMLTYFGGKERSLAELGELAAQAGLAVRAAHPISYVSIVEMTAL.

Residue Arg-11 coordinates substrate. S-adenosyl-L-methionine-binding positions include Trp-133, His-153, 175-179 (DVGGG), Gly-177, Asp-200, 227-228 (SF), and 242-243 (SA). The Proton acceptor role is filled by His-246. Residue Asp-247 coordinates substrate.

This sequence belongs to the class I-like SAM-binding methyltransferase superfamily. Cation-independent O-methyltransferase family.

It carries out the reaction 2,7-dihydroxy-5-methyl-1-naphthoate + S-adenosyl-L-methionine = 2-hydroxy-7-methoxy-5-methyl-1-naphthoate + S-adenosyl-L-homocysteine + H(+). It functions in the pathway antibiotic biosynthesis. S-adenosyl-L-methionine-dependent O-methyltransferase that catalyzes regiospecific methylation at the 7-hydroxy group of 2,7-dihydroxy-5-methyl-1-naphthoate in the biosynthesis of the naphthoate moiety of the neocarzinostatin chromophore. Also recognizes other dihydroxynaphthoate as substrates and catalyzes their regiospecific O-methylation. The carboxylate and its ortho-hydroxy groups of the substrate appear to be crucial for NcsB1 substrate recognition and binding, and O-methylation takes place only at the free hydroxy group of these dihydroxynaphthoic acids. This is 2,7-dihydroxy-5-methyl-1-naphthoate 7-O-methyltransferase from Streptomyces carzinostaticus.